Reading from the N-terminus, the 664-residue chain is Chaperone protein DnaK (664 aa).

T201 bears the Phosphothreonine; by autocatalysis mark. Residues 574 to 592 (LKEDASTEKIKEASEELSR) are compositionally biased toward basic and acidic residues. A disordered region spans residues 574 to 664 (LKEDASTEKI…DVEIVDKPND (91 aa)). The span at 600–617 (AMQSQSASAAPSSAANAQ) shows a compositional bias: low complexity. The span at 639–649 (GNSTSASSNNE) shows a compositional bias: polar residues.

This sequence belongs to the heat shock protein 70 family.

Acts as a chaperone. This is Chaperone protein DnaK from Chlamydia felis (strain Fe/C-56) (Chlamydophila felis).